Here is a 312-residue protein sequence, read N- to C-terminus: Olfactory receptor 4K17 (312 aa).

Residues 1-25 (MKLLNQSQVSEFILLGLTSSQDVEF) lie on the Extracellular side of the membrane. An N-linked (GlcNAc...) asparagine glycan is attached at asparagine 5. A helical membrane pass occupies residues 26 to 49 (LLFALFSVIYVVTVLGNLLIIVTV). The Cytoplasmic segment spans residues 50-57 (FNTPNLNT). A helical membrane pass occupies residues 58–79 (PMYFLLGNLSFVDMTLASFATP). Residues 80–100 (KVILNLLKKQKVISFAGCFTQ) lie on the Extracellular side of the membrane. The cysteines at positions 97 and 189 are disulfide-linked. A helical transmembrane segment spans residues 101–120 (IFLLHLLGGVEMVLLVSMAF). At 121-139 (DRYVAICKPLHYMTIMNKK) the chain is on the cytoplasmic side. Residues 140 to 158 (VCVLLVVTSWLLGLLHSGF) traverse the membrane as a helical segment. Topologically, residues 159–195 (QIPFAVNLPFCGPNVVDSIFCDLPLVTKLACIDIYFV) are extracellular. Residues 196–219 (QVVIVANSGIISLSCFIILLISYS) form a helical membrane-spanning segment. Residues 220–235 (LILITIKNHSPTGQSK) are Cytoplasmic-facing. Residues 236–258 (ARSTLTAHITVVILFFGPCIFIY) form a helical membrane-spanning segment. The Extracellular portion of the chain corresponds to 259-269 (IWPFGNHSVDK). The N-linked (GlcNAc...) asparagine glycan is linked to asparagine 264. Residues 270–289 (FLAVFYTIITPILNPIIYTL) form a helical membrane-spanning segment. Over 290-312 (RNKEMKISMKKLWRAFVNSREDT) the chain is Cytoplasmic.

It belongs to the G-protein coupled receptor 1 family.

It localises to the cell membrane. Functionally, odorant receptor. This chain is Olfactory receptor 4K17 (OR4K17), found in Homo sapiens (Human).